The chain runs to 379 residues: Alcohol dehydrogenase class-2 isozyme 2 (379 aa).

The Zn(2+) site is built by C47, H69, C99, C102, C105, C113, and C176. Residues G205–G210, D229, K234, V298–V300, and R374 each bind NAD(+).

Belongs to the zinc-containing alcohol dehydrogenase family. Class-II subfamily. Homodimer. The cofactor is Zn(2+).

Its subcellular location is the cytoplasm. It carries out the reaction a primary alcohol + NAD(+) = an aldehyde + NADH + H(+). It catalyses the reaction a secondary alcohol + NAD(+) = a ketone + NADH + H(+). This is Alcohol dehydrogenase class-2 isozyme 2 (ADH2-2) from Oryctolagus cuniculus (Rabbit).